A 155-amino-acid chain; its full sequence is 6,7-dimethyl-8-ribityllumazine synthase (155 aa).

5-amino-6-(D-ribitylamino)uracil-binding positions include Phe-22, 56–58 (AFE), and 80–82 (AVI). 85 to 86 (AT) serves as a coordination point for (2S)-2-hydroxy-3-oxobutyl phosphate. His-88 functions as the Proton donor in the catalytic mechanism. Residue Phe-113 participates in 5-amino-6-(D-ribitylamino)uracil binding. Arg-127 provides a ligand contact to (2S)-2-hydroxy-3-oxobutyl phosphate.

It belongs to the DMRL synthase family.

The enzyme catalyses (2S)-2-hydroxy-3-oxobutyl phosphate + 5-amino-6-(D-ribitylamino)uracil = 6,7-dimethyl-8-(1-D-ribityl)lumazine + phosphate + 2 H2O + H(+). It functions in the pathway cofactor biosynthesis; riboflavin biosynthesis; riboflavin from 2-hydroxy-3-oxobutyl phosphate and 5-amino-6-(D-ribitylamino)uracil: step 1/2. Functionally, catalyzes the formation of 6,7-dimethyl-8-ribityllumazine by condensation of 5-amino-6-(D-ribitylamino)uracil with 3,4-dihydroxy-2-butanone 4-phosphate. This is the penultimate step in the biosynthesis of riboflavin. In Clostridium acetobutylicum (strain ATCC 824 / DSM 792 / JCM 1419 / IAM 19013 / LMG 5710 / NBRC 13948 / NRRL B-527 / VKM B-1787 / 2291 / W), this protein is 6,7-dimethyl-8-ribityllumazine synthase.